Reading from the N-terminus, the 178-residue chain is MNTPVSVNEKKDFVKWFLNNYQLKQRECVWILNYLMSHDQLMHKVHFVEHAKYCPRGLIMSANCVKETPFHFFKQNVMTTDAEKSFHDIRLNRDEDIYIQLNFKSSFQNPNYVAVLEENPYLPKHIEVNEKDRLLAERFLEESVFSFRRNRLLKQIDEALDNHDQEAFQRLTAELKTL.

Belongs to the UPF0302 family.

The sequence is that of UPF0302 protein Bcer98_1244 from Bacillus cytotoxicus (strain DSM 22905 / CIP 110041 / 391-98 / NVH 391-98).